Here is a 707-residue protein sequence, read N- to C-terminus: Pheromone-processing carboxypeptidase KEX1 (707 aa).

A signal peptide spans 1–17 (MLLSVFIILINTLFVLA). At 18-564 (IPPKEGSDNN…EESTSSKFTR (547 aa)) the chain is on the lumenal side. N-linked (GlcNAc...) asparagine glycans are attached at residues Asn64 and Asn121. Ser183 is an active-site residue. N-linked (GlcNAc...) asparagine glycosylation is found at Asn293 and Asn378. The active site involves Asp393. N-linked (GlcNAc...) asparagine glycosylation is found at Asn440 and Asn448. The active site involves His451. The tract at residues 496 to 557 (GQEIPADESS…ASFIPEPEES (62 aa)) is disordered. Positions 503–533 (ESSKPIEDKPDDKPIEDKPEETKPEQTKPED) are enriched in basic and acidic residues. Residues 536–549 (SSSTSEIIPTSEAS) show a composition bias toward low complexity. The helical transmembrane segment at 565–585 (LIQLGVIFIIFWGVYILYVSY) threads the bilayer. The Cytoplasmic portion of the chain corresponds to 586 to 707 (RARPSSIIKK…GNPKKTESKS (122 aa)). The tract at residues 644–707 (NTSNRGRYAP…GNPKKTESKS (64 aa)) is disordered. Positions 683–694 (SDDDEDDDEDVE) are enriched in acidic residues. Basic and acidic residues predominate over residues 695–707 (THEGNPKKTESKS).

This sequence belongs to the peptidase S10 family.

The protein localises to the golgi apparatus. The protein resides in the trans-Golgi network membrane. It carries out the reaction Preferential release of a C-terminal arginine or lysine residue.. Functionally, protease with a carboxypeptidase B-like function involved in the C-terminal processing of the lysine and arginine residues from protein precursors. Promotes cell fusion and is involved in the programmed cell death. In Candida tropicalis (strain ATCC MYA-3404 / T1) (Yeast), this protein is Pheromone-processing carboxypeptidase KEX1 (KEX1).